The following is a 394-amino-acid chain: Ribulose bisphosphate carboxylase large chain (394 aa).

K5 is modified (N6,N6,N6-trimethyllysine). 2 residues coordinate substrate: N114 and T164. The active-site Proton acceptor is K166. K168 lines the substrate pocket. Mg(2+) is bound by residues K192, D194, and E195. At K192 the chain carries N6-carboxylysine. H285 serves as the catalytic Proton acceptor. R286, H318, and S370 together coordinate substrate.

Belongs to the RuBisCO large chain family. Type I subfamily. Heterohexadecamer of 8 large chains and 8 small chains; disulfide-linked. The disulfide link is formed within the large subunit homodimers. Mg(2+) is required as a cofactor. The disulfide bond which can form in the large chain dimeric partners within the hexadecamer appears to be associated with oxidative stress and protein turnover.

The protein localises to the plastid. Its subcellular location is the chloroplast. The enzyme catalyses 2 (2R)-3-phosphoglycerate + 2 H(+) = D-ribulose 1,5-bisphosphate + CO2 + H2O. It carries out the reaction D-ribulose 1,5-bisphosphate + O2 = 2-phosphoglycolate + (2R)-3-phosphoglycerate + 2 H(+). Its function is as follows. RuBisCO catalyzes two reactions: the carboxylation of D-ribulose 1,5-bisphosphate, the primary event in carbon dioxide fixation, as well as the oxidative fragmentation of the pentose substrate in the photorespiration process. Both reactions occur simultaneously and in competition at the same active site. The polypeptide is Ribulose bisphosphate carboxylase large chain (rbcL) (Nelumbo lutea (American lotus)).